Reading from the N-terminus, the 457-residue chain is tRNA (guanine(37)-N(1))-methyltransferase (457 aa).

S-adenosyl-L-methionine contacts are provided by residues His240, 278-279, 306-307, and Asn338; these read DL and DG.

Belongs to the class I-like SAM-binding methyltransferase superfamily. TRM5/TYW2 family. As to quaternary structure, monomer.

It localises to the mitochondrion matrix. Its subcellular location is the nucleus. The protein localises to the cytoplasm. The enzyme catalyses guanosine(37) in tRNA + S-adenosyl-L-methionine = N(1)-methylguanosine(37) in tRNA + S-adenosyl-L-homocysteine + H(+). Functionally, specifically methylates the N1 position of guanosine-37 in various cytoplasmic and mitochondrial tRNAs. Methylation is not dependent on the nature of the nucleoside 5' of the target nucleoside. This is the first step in the biosynthesis of wybutosine (yW), a modified base adjacent to the anticodon of tRNAs and required for accurate decoding. The sequence is that of tRNA (guanine(37)-N(1))-methyltransferase from Drosophila melanogaster (Fruit fly).